The sequence spans 387 residues: Phosphoglycerate kinase (387 aa).

Substrate-binding positions include 21-23 (DLN), R36, and 59-62 (HLGR). At K84 the chain carries N6-acetyllysine. Substrate is bound by residues R113 and R146. ATP is bound by residues K197, E314, and 340–343 (GGDT).

Belongs to the phosphoglycerate kinase family. As to quaternary structure, monomer.

Its subcellular location is the cytoplasm. It catalyses the reaction (2R)-3-phosphoglycerate + ATP = (2R)-3-phospho-glyceroyl phosphate + ADP. Its pathway is carbohydrate degradation; glycolysis; pyruvate from D-glyceraldehyde 3-phosphate: step 2/5. The chain is Phosphoglycerate kinase from Shigella sonnei (strain Ss046).